Consider the following 150-residue polypeptide: SsrA-binding protein (150 aa).

The protein belongs to the SmpB family.

It is found in the cytoplasm. Functionally, required for rescue of stalled ribosomes mediated by trans-translation. Binds to transfer-messenger RNA (tmRNA), required for stable association of tmRNA with ribosomes. tmRNA and SmpB together mimic tRNA shape, replacing the anticodon stem-loop with SmpB. tmRNA is encoded by the ssrA gene; the 2 termini fold to resemble tRNA(Ala) and it encodes a 'tag peptide', a short internal open reading frame. During trans-translation Ala-aminoacylated tmRNA acts like a tRNA, entering the A-site of stalled ribosomes, displacing the stalled mRNA. The ribosome then switches to translate the ORF on the tmRNA; the nascent peptide is terminated with the 'tag peptide' encoded by the tmRNA and targeted for degradation. The ribosome is freed to recommence translation, which seems to be the essential function of trans-translation. The polypeptide is SsrA-binding protein (Coprothermobacter proteolyticus (strain ATCC 35245 / DSM 5265 / OCM 4 / BT)).